The chain runs to 110 residues: Large ribosomal subunit protein uL22 (110 aa).

It belongs to the universal ribosomal protein uL22 family. Part of the 50S ribosomal subunit.

Functionally, this protein binds specifically to 23S rRNA; its binding is stimulated by other ribosomal proteins, e.g. L4, L17, and L20. It is important during the early stages of 50S assembly. It makes multiple contacts with different domains of the 23S rRNA in the assembled 50S subunit and ribosome. In terms of biological role, the globular domain of the protein is located near the polypeptide exit tunnel on the outside of the subunit, while an extended beta-hairpin is found that lines the wall of the exit tunnel in the center of the 70S ribosome. This is Large ribosomal subunit protein uL22 from Alkaliphilus metalliredigens (strain QYMF).